The chain runs to 69 residues: DNA gyrase inhibitor YacG (69 aa).

The Zn(2+) site is built by Cys13, Cys16, Cys32, and Cys36.

The protein belongs to the DNA gyrase inhibitor YacG family. In terms of assembly, interacts with GyrB. The cofactor is Zn(2+).

Inhibits all the catalytic activities of DNA gyrase by preventing its interaction with DNA. Acts by binding directly to the C-terminal domain of GyrB, which probably disrupts DNA binding by the gyrase. The sequence is that of DNA gyrase inhibitor YacG from Neisseria gonorrhoeae (strain ATCC 700825 / FA 1090).